The sequence spans 466 residues: Uridine kinase-like protein 3 (466 aa).

The interval 41–246 (HGQPFVIGVA…IVQHIHTKLG (206 aa)) is uridine kinase. The uracil phosphoribosyltransferase stretch occupies residues 256–466 (NLYVIQSTFQ…GDRYFGTDDE (211 aa)). GTP is bound by residues lysine 280, arginine 289, and 323–326 (CKKL). 5-phospho-alpha-D-ribose 1-diphosphate contacts are provided by arginine 333 and arginine 358. Arginine 378 contributes to the GTP binding site. Residues aspartate 384, 389 to 392 (TGNS), and glutamate 455 each bind 5-phospho-alpha-D-ribose 1-diphosphate. Residue 454–456 (GEF) coordinates uracil.

In the N-terminal section; belongs to the uridine kinase family. This sequence in the C-terminal section; belongs to the UPRTase family. The cofactor is Mg(2+).

The enzyme catalyses UMP + diphosphate = 5-phospho-alpha-D-ribose 1-diphosphate + uracil. The catalysed reaction is cytidine + ATP = CMP + ADP + H(+). It carries out the reaction uridine + ATP = UMP + ADP + H(+). The protein operates within pyrimidine metabolism; UMP biosynthesis via salvage pathway; UMP from uracil: step 1/1. It functions in the pathway pyrimidine metabolism; CTP biosynthesis via salvage pathway; CTP from cytidine: step 1/3. It participates in pyrimidine metabolism; UMP biosynthesis via salvage pathway; UMP from uridine: step 1/1. Its activity is regulated as follows. Allosterically activated by GTP. Its function is as follows. Involved in the pyrimidine salvage pathway. The uracil phosphoribosyltransferase (UPRT) activity, that catalyzes the conversion of uracil and 5-phospho-alpha-D-ribose 1-diphosphate (PRPP) to UMP and diphosphate, is unsure. This chain is Uridine kinase-like protein 3 (UKL3), found in Arabidopsis thaliana (Mouse-ear cress).